A 181-amino-acid polypeptide reads, in one-letter code: Large ribosomal subunit protein uL16 (181 aa).

Belongs to the universal ribosomal protein uL16 family.

This is Large ribosomal subunit protein uL16 from Pyrococcus abyssi (strain GE5 / Orsay).